A 370-amino-acid chain; its full sequence is tRNA-specific 2-thiouridylase MnmA (370 aa).

Residues 11-18 (GMSGGVDS) and M37 contribute to the ATP site. The segment at 97–99 (NPD) is interaction with target base in tRNA. C102 acts as the Nucleophile in catalysis. A disulfide bond links C102 and C199. Residue G126 participates in ATP binding. The segment at 149–151 (KDQ) is interaction with tRNA. C199 acts as the Cysteine persulfide intermediate in catalysis. The interaction with tRNA stretch occupies residues 307-308 (RY).

Belongs to the MnmA/TRMU family.

The protein resides in the cytoplasm. It carries out the reaction S-sulfanyl-L-cysteinyl-[protein] + uridine(34) in tRNA + AH2 + ATP = 2-thiouridine(34) in tRNA + L-cysteinyl-[protein] + A + AMP + diphosphate + H(+). In terms of biological role, catalyzes the 2-thiolation of uridine at the wobble position (U34) of tRNA, leading to the formation of s(2)U34. The sequence is that of tRNA-specific 2-thiouridylase MnmA from Staphylococcus saprophyticus subsp. saprophyticus (strain ATCC 15305 / DSM 20229 / NCIMB 8711 / NCTC 7292 / S-41).